The chain runs to 566 residues: Alpha-keto-acid decarboxylase (566 aa).

Residue Glu-61 participates in thiamine diphosphate binding. The tract at residues 396-478 (TSFYGMADHR…VVVNNDGYTV (83 aa)) is thiamine pyrophosphate binding. 3 residues coordinate Mg(2+): Asp-446, Asn-473, and Gly-475.

The protein belongs to the TPP enzyme family. The cofactor is a metal cation. Thiamine diphosphate is required as a cofactor.

Its function is as follows. Decarboxylates branched-chain and aromatic alpha-keto acids to aldehydes. This Mycobacterium ulcerans (strain Agy99) protein is Alpha-keto-acid decarboxylase (kdc).